The primary structure comprises 1303 residues: Zinc finger CCCH domain-containing protein 4 (1303 aa).

Residues 1 to 33 show a composition bias toward pro residues; the sequence is MEAAPGTPPPPPSESPPPPSPPPPSTPSPPPCS. Positions 1-388 are disordered; sequence MEAAPGTPPP…RDHDKPHQQS (388 aa). Over residues 53-73 the composition is skewed to acidic residues; the sequence is DREDGELEEGELEDDGAEETQ. A phosphothreonine mark is found at Thr-72 and Thr-75. A phosphoserine mark is found at Ser-76, Ser-92, and Ser-94. Residues 80-99 show a composition bias toward basic and acidic residues; sequence ERSRKEKGEKHHSDSDEEKS. The stretch at 95–128 forms a coiled coil; that stretch reads DEEKSHRRLKRKRKKEREKEKRRSKKRRKSKHKR. The span at 100–130 shows a compositional bias: basic residues; that stretch reads HRRLKRKRKKEREKEKRRSKKRRKSKHKRHA. Residues 135–144 show a composition bias toward acidic residues; it reads DFSDFSDDSD. Residue Tyr-155 is modified to Phosphotyrosine. A compositionally biased stretch (acidic residues) spans 194-218; that stretch reads EDYENEQYGEYEGDEEEDMGKEDYD. Basic and acidic residues predominate over residues 219–235; that stretch reads DFTKELNQYRRAKEGSS. The segment covering 238–251 has biased composition (basic residues); that stretch reads RGSRGRGRGYRGRG. The segment covering 252-274 has biased composition (gly residues); the sequence is SRGGSRGRGMGRGSRGRGRGSMG. A compositionally biased stretch (acidic residues) spans 278–304; sequence PEDEEDFYEEEMDYGESEEPMGDDDYD. Over residues 305–321 the composition is skewed to basic and acidic residues; the sequence is EYSKELNQYRRSKDSRG. Positions 323–346 are enriched in basic residues; it reads GLSRGRGRGSRGRGKGMGRGRGRG. A compositionally biased stretch (acidic residues) spans 358–369; the sequence is NDDEDFYDEDMG. The segment covering 377-388 has biased composition (basic and acidic residues); it reads RSRDHDKPHQQS. 3 C3H1-type zinc fingers span residues 390–417, 419–446, and 447–470; these read KKGK…HDIE, PKKR…HGDF, and PCKL…HDPL. The span at 486 to 496 shows a compositional bias: acidic residues; that stretch reads AEAGAEDEKEV. Residues 486-571 are disordered; it reads AEAGAEDEKE…HEPLSPQQLQ (86 aa). 2 stretches are compositionally biased toward pro residues: residues 507–529 and 539–558; these read LPKP…PQAP and GGPP…PQMP. At Arg-601 the chain carries Asymmetric dimethylarginine. Over residues 605 to 624 the composition is skewed to pro residues; sequence PGGPPGPMGPGPNMGPPGPM. Disordered stretches follow at residues 605–685, 710–955, and 996–1288; these read PGGP…SGMM, GLLG…PRSQ, and PPVP…ASLK. Residues 630–650 are compositionally biased toward basic and acidic residues; that stretch reads PDMHPDMHPDMHPDMHADMHA. A compositionally biased stretch (pro residues) spans 659-673; sequence NPGPPMGPGGPPMMP. Basic and acidic residues-rich tracts occupy residues 717-739 and 782-795; these read DYGH…HPLE and ERAR…KQDR. A coiled-coil region spans residues 767-800; it reads RALYLRIQQKQQEEEERARRLAESSKQDRENEEG. Residues Ser-807 and Ser-808 each carry the phosphoserine modification. Residues 815–843 show a composition bias toward polar residues; that stretch reads SSVTSILKTLRQQTSSRPPASVGELSSSG. Positions 860-875 are enriched in basic and acidic residues; the sequence is ADPRLSRDPRLTRHVE. Residues Ser-904, Ser-907, and Ser-908 each carry the phosphoserine modification. Residues 904–918 show a composition bias toward low complexity; the sequence is SLHSSPVGPSSSKGS. 2 stretches are compositionally biased toward polar residues: residues 1028 to 1038 and 1053 to 1062; these read GASTDSSTQGA and VNATGSSAAP. A compositionally biased stretch (basic and acidic residues) spans 1067–1084; that stretch reads KPSDPRVRKAPTDPRLQK. A compositionally biased stretch (low complexity) spans 1097-1110; the sequence is PGPAEAPSPTASPS. Ser-1104 is subject to Phosphoserine. At Thr-1106 the chain carries Phosphothreonine. Residues Ser-1108, Ser-1110, and Ser-1114 each carry the phosphoserine modification. Phosphothreonine is present on Thr-1118. Gly residues predominate over residues 1129 to 1139; the sequence is GGLGQGGGGGQ. Positions 1224–1234 are enriched in low complexity; it reads KAAAAPAATTA. Residues 1235 to 1245 show a composition bias toward pro residues; it reads TPPPEGAPPQP. Polar residues predominate over residues 1259-1268; the sequence is VKQTPKTGSG. Phosphoserine is present on residues Ser-1269 and Ser-1275.

The protein belongs to the suppressor of sable family. In terms of assembly, interacts with WDR82.

It localises to the chromosome. Its function is as follows. RNA-binding protein that suppresses transcription of long non-coding RNAs (lncRNAs). LncRNAs are defined as transcripts more than 200 nucleotides that are not translated into protein. Together with WDR82, part of a transcription termination checkpoint that promotes transcription termination of lncRNAs and their subsequent degradation by the exosome. The transcription termination checkpoint is activated by the inefficiently spliced first exon of lncRNAs. This is Zinc finger CCCH domain-containing protein 4 from Homo sapiens (Human).